Reading from the N-terminus, the 183-residue chain is MKIYHYYFDTKEFYKEENYKPVKGLGLPAHSTIKKPLEPKEGYAVVFDERTQDWIYEEDHRGKRAWTFNKEEIFISDIGSPVGITFDEPGEFDIWTDDGWKEDETYKRVLIRNRKIEELYKEFQVLNNMIEASVANKKEKFYYKNLKRFFALLEKHEHLGGEFPSWPEKEQKPWYKRLFKHYV.

Belongs to the tfa family.

Functionally, chaperone involved, together with gp57, in the assembly of the distal-half tail fiber of T4. It is necessary for the maturation of protein gp37 to the dimeric structural subunit P37. The sequence is that of Tail fiber assembly protein (38) from Escherichia coli (Bacteriophage T4).